Here is a 1428-residue protein sequence, read N- to C-terminus: MAFRKETKIKSNFSKISIGLASPEEILENSSGEVLKPETINYRTYKPERDGLFCERIFGPVKDYECHCGKYKRIRYKGIVCDRCGVEVTEKKVRRERMGHIQLVVPVAHIWYFRSLPNKIGYLLGLPTKKLDAIVYYERYVVIQPGVKAEDGINKYDLLSEEEYLDILDTLPKENQYLEDTDPNKFIAKMGAEAIYDLLSTLDLDALSYELRHKASNDSSQQRKNEALKRLQVVESFRASRGRNKPEWMIVRIVPVIPPELRPLVPLDGGRFATSDLNDLYRRVIIRNNRLKRLIEIKAPEVILRNEKRMLQEAVDSLFDNSRKSSAVKTDANRPLKSLSDSLKGKQGRFRQNLLGKRVDYSARSVIVVGPELKMGECGIPKLMAAELYKPFIIRKLIERGIVKTVKSAKKIVDRKEPVIWDILEHVMKGHPVLLNRAPTLHRLGIQAFQPHMIEGKAIQLHPLACTAFNADFDGDQMAVHLPLSNDAILEAQMLMLQAHNILNPANGAPITVPAQDMVLGLYYITKLRKGAKGEGLTFYGPEEALIAYNEGKVDIHAIVNVVVKDLDKDGKIVDVMMKETSVGRVIVNEIVPAEVGYLNTIISKKSLRDIISDVIKAVGVARACEFLDGIKNLGYYMAFKGGLSFNLGDIIIPKEKEELVKRGNEEVEQIMMNYNMGFITDNERYNQVIDTWTHVNSDLSDILYKTIKNDDQGFNSVFMMLDSGARGSKEQIRQLSGMRGLMAKPQKAGAEGAQIIENPILSNFKEGLSVLEYFISTHGARKGLADTALKTADAGYLTRRLVDVSHDVIINEEDCGTLRGLVCTALKNNDEVIATLYERILGRVSVHDIVHPTTGKLIVAGGEEITEDIAQEIEDSPIESVEIRSVLTCESKKGVCAKCYGRNLASSRMVQKGEAVGVIAAQSIGEPGTQLTLRTFHAGGIAGNMAANASIVAKNNARLEFEELRTVDTVDEMGEAVKVVVGRLAEVRFIDVNTGIILSTHNVPYGSKLYAADGDIVEKGKLIAKWDPFNAVIITEATGKIEFESVVENVTYKVESDEATGLREIIIIESKDKTKVPSAHIVTEDGNLIRTYNLPVGGHVVVENGQAVKAGDIIVKIPRAVGKAGDITGGLPRVTELFEARNPSNPAVVSEIDGEITMGKIKRGNREIIVTSKTGEVKKYLVNLSKQILVQENDYVRAGTPLSDGAITPADILAIKGPTAVQEYIVNEVQDVYRLQGVKINDKHFEIIVRQMMRKVEIDEPGDTRFLEQQVVDKQEFMEENDRIWGKKVVVDSGDSQNLQPGQIVTARKLRDENSMLKRRDLKPVEVRDAIPATSTQILQGITRAALGTSSFMSAASFQETTKVLNEAAINGKVDRLEGMKENVICGHLIPAGTGQREFEKIIVGSKEEYDRILANRKNVLDYSEVE.

Zn(2+)-binding residues include cysteine 66, cysteine 68, cysteine 81, and cysteine 84. 3 residues coordinate Mg(2+): aspartate 472, aspartate 474, and aspartate 476. The Zn(2+) site is built by cysteine 816, cysteine 890, cysteine 897, and cysteine 900.

The protein belongs to the RNA polymerase beta' chain family. In terms of assembly, the RNAP catalytic core consists of 2 alpha, 1 beta, 1 beta' and 1 omega subunit. When a sigma factor is associated with the core the holoenzyme is formed, which can initiate transcription. Requires Mg(2+) as cofactor. Zn(2+) is required as a cofactor.

It catalyses the reaction RNA(n) + a ribonucleoside 5'-triphosphate = RNA(n+1) + diphosphate. Functionally, DNA-dependent RNA polymerase catalyzes the transcription of DNA into RNA using the four ribonucleoside triphosphates as substrates. This Phocaeicola vulgatus (strain ATCC 8482 / DSM 1447 / JCM 5826 / CCUG 4940 / NBRC 14291 / NCTC 11154) (Bacteroides vulgatus) protein is DNA-directed RNA polymerase subunit beta'.